The sequence spans 332 residues: Galectin-4 (332 aa).

Galectin domains lie at 19–150 (YHNP…INFI) and 203–332 (FNGR…YVQI). Position 265–271 (265–271 (WGSEERK)) interacts with a beta-D-galactoside. The residue at position 267 (serine 267) is a Phosphoserine.

In terms of assembly, monomer.

In terms of biological role, galectin that binds lactose and a related range of sugars. May be involved in the assembly of adherens junctions. This is Galectin-4 (LGALS4) from Bos taurus (Bovine).